A 100-amino-acid polypeptide reads, in one-letter code: MLLSPHEQERLLIHVAAGLARERRARGLRLNHPEATALLTSFLLEGARDGRSVADLMTAGRGVLTRDDVMEGVPEMLAEVQVEATFPDGTKLVTVHQPIA.

It belongs to the urease gamma subunit family. Heterotrimer of UreA (gamma), UreB (beta) and UreC (alpha) subunits. Three heterotrimers associate to form the active enzyme.

The protein resides in the cytoplasm. It carries out the reaction urea + 2 H2O + H(+) = hydrogencarbonate + 2 NH4(+). Its pathway is nitrogen metabolism; urea degradation; CO(2) and NH(3) from urea (urease route): step 1/1. The chain is Urease subunit gamma from Frankia alni (strain DSM 45986 / CECT 9034 / ACN14a).